The chain runs to 110 residues: Large ribosomal subunit protein uL22 (110 aa).

The protein belongs to the universal ribosomal protein uL22 family. Part of the 50S ribosomal subunit.

Functionally, this protein binds specifically to 23S rRNA; its binding is stimulated by other ribosomal proteins, e.g. L4, L17, and L20. It is important during the early stages of 50S assembly. It makes multiple contacts with different domains of the 23S rRNA in the assembled 50S subunit and ribosome. Its function is as follows. The globular domain of the protein is located near the polypeptide exit tunnel on the outside of the subunit, while an extended beta-hairpin is found that lines the wall of the exit tunnel in the center of the 70S ribosome. The polypeptide is Large ribosomal subunit protein uL22 (Yersinia pseudotuberculosis serotype O:1b (strain IP 31758)).